The chain runs to 996 residues: Sodium/potassium-transporting ATPase subunit alpha-A (996 aa).

2 helical membrane-spanning segments follow: residues 73–93 (LFGGFQMLLWIGSILCFIAYT) and 107–123 (LYLGLALLFVVIMTGCF). Residues 191-211 (DNSSLTGESEPQSRSTECTND) are disordered. The next 2 membrane-spanning stretches (helical) occupy residues 268 to 290 (FIHIITAMAVSLAAVFAVISFLY) and 297 to 325 (AAIFMIGIIVAKVPEGLLATVTVCLTLTA). The 4-aspartylphosphate intermediate role is filled by D353. K483 is an ATP binding site. Mg(2+) contacts are provided by D692 and D696. 4 helical membrane passes run 762–785 (LSPFLMYILFDLPLAIGTVTILCI), 820–847 (ERLISMAYGQIGVMQAFGGFFTYFVIMG), 889–909 (YTCHTAFFISIVIVQWTDLII), and 926–951 (TLNFALVFETCVAAFLSYTPGMDKGL).

This sequence belongs to the cation transport ATPase (P-type) (TC 3.A.3) family. Type IIC subfamily. In terms of assembly, the sodium/potassium-transporting ATPase is composed of a catalytic alpha subunit, an auxiliary non-catalytic beta subunit and an additional regulatory subunit.

It is found in the cell membrane. It carries out the reaction K(+)(out) + Na(+)(in) + ATP + H2O = K(+)(in) + Na(+)(out) + ADP + phosphate + H(+). Functionally, this is the catalytic component of the active enzyme, which catalyzes the hydrolysis of ATP coupled with the exchange of sodium and potassium ions across the plasma membrane. This action creates the electrochemical gradient of sodium and potassium ions, providing the energy for active transport of various nutrients. This Artemia franciscana (Brine shrimp) protein is Sodium/potassium-transporting ATPase subunit alpha-A.